The chain runs to 385 residues: MKLLPGVGVFGTGSSARVLVPLLRAEGFTVEALWGKTEEEAKQLAEEMNITFYTSRTDDVLLHQDVDLVCINIPPPLTRQISVKALGIGKNVVCEKAATSMDAFRMVTASRYYPQLMSLVGNVLRFLPAFVRMKQLIAEHYVGAVMICDARIYSGSLLSPSYGWICDELMGGGGLHTMGTYIVDLLTHLTGQKAEKVHGLLKTFVRQNATIRGIRHVTSDDFCFFQMLMGGGVCSTVTLNFNMPGAFVHEVMVVGSAGRLVARGADLYGQKNSAAQEELLVRDSLAVGAGLPEQGPQDVPLLYLKGMVYMVQALRQSFQGQGDRRTWDRTPVSMAASFEDGLYMQSVVDAIKRSSRSGEWETVEMLAEEPDANQNLSETLQRNNL.

The first 25 residues, 1-25, serve as a signal peptide directing secretion; it reads MKLLPGVGVFGTGSSARVLVPLLRA.

It belongs to the Gfo/Idh/MocA family.

Its subcellular location is the secreted. It is found in the extracellular space. The protein localises to the extracellular matrix. Promotes matrix assembly. In Mus musculus (Mouse), this protein is Glucose-fructose oxidoreductase domain-containing protein 2 (Gfod2).